Here is a 75-residue protein sequence, read N- to C-terminus: Small ribosomal subunit protein bS16 (75 aa).

It belongs to the bacterial ribosomal protein bS16 family.

The sequence is that of Small ribosomal subunit protein bS16 from Nitratiruptor sp. (strain SB155-2).